We begin with the raw amino-acid sequence, 266 residues long: ATG8-interacting protein 2 (266 aa).

The AIM (Atg8-family-interacting motif) motif lies at 14–17 (WEVV). The chain crosses the membrane as a helical span at residues 191–210 (TNTVWSICIAAAVMGIVILG). Residues 218–221 (WQIL) carry the AIM (Atg8-family-interacting motif) motif.

Interacts with ATG8F.

The protein localises to the endoplasmic reticulum membrane. It is found in the membrane. May be involved in salt stress-induced vesicle-to-vacuole trafficking pathway. Through its interaction with ATG8F, may enable delivery of the vesicle bodies to the vacuole by an autophagic pathway. Plays a role in seed germination in response to exogenous abscisic acid (ABA) treatment. The protein is ATG8-interacting protein 2 of Arabidopsis thaliana (Mouse-ear cress).